We begin with the raw amino-acid sequence, 2038 residues long: Fer-1-like protein 5 (2038 aa).

C2 domains are found at residues 1-100, 145-265, 307-424, 1055-1186, 1225-1345, 1467-1587, and 1705-1853; these read MLRV…MFVR, TQKK…TLLR, QNTR…QGMY, TPED…FTPL, IPCK…SLNY, PKPP…ARCG, and GPPG…KQCS. Ca(2+)-binding residues include D1502, D1508, D1557, F1558, D1559, D1565, D1824, S1827, and D1830. A helical membrane pass occupies residues 1961–1981; the sequence is IICLVVTLVIGFILLNFVYSA.

The protein belongs to the ferlin family. In terms of assembly, interacts (via second C2 domain) with EHD1 and EHD2. Requires Ca(2+) as cofactor. As to expression, expressed in differentiating myoblasts and myotubes.

Its subcellular location is the cell membrane. The protein localises to the membrane. Functionally, plays a role in myoblast fusion; probable mediator of endocytic recycling for membrane trafficking events during myotube formation. The sequence is that of Fer-1-like protein 5 (Fer1l5) from Mus musculus (Mouse).